We begin with the raw amino-acid sequence, 86 residues long: Small ribosomal subunit protein eS27 (86 aa).

The segment at 39–61 (CQGCFNITTVFSHSQTVVVCPGC) adopts a C4-type zinc-finger fold.

The protein belongs to the eukaryotic ribosomal protein eS27 family. It depends on Zn(2+) as a cofactor.

The polypeptide is Small ribosomal subunit protein eS27 (RPS27) (Hordeum vulgare (Barley)).